A 114-amino-acid chain; its full sequence is Monothiol glutaredoxin-S8 (114 aa).

The Glutaredoxin domain maps to 1–113; that stretch reads MDRVTRLASQ…PLLRDAGALW (113 aa). Cys-21 is a [2Fe-2S] cluster binding site.

The protein belongs to the glutaredoxin family. CC-type subfamily.

Its subcellular location is the cytoplasm. Functionally, may only reduce GSH-thiol disulfides, but not protein disulfides. The protein is Monothiol glutaredoxin-S8 (GRXS8) of Oryza sativa subsp. japonica (Rice).